Reading from the N-terminus, the 392-residue chain is General receptor for phosphoinositides 1-associated scaffold protein (392 aa).

Residues 1-50 are disordered; that stretch reads MTLRRLRKLQQKEEATAAPDPAGRAPDSEAARAAPLPSGPPAAAAPPGAP. The span at 37–49 shows a compositional bias: pro residues; sequence PSGPPAAAAPPGA. At threonine 76 the chain carries Phosphothreonine. Serine 93 bears the Phosphoserine mark. The region spanning 100–189 is the PDZ domain; the sequence is VLTLEKGDNQ…VLRLETLYGT (90 aa). Residues 180–257 form an interaction with PSCD3 region; it reads VLRLETLYGT…GAGLLPGSLP (78 aa). At tyrosine 236 the chain carries Phosphotyrosine. Position 269 is an omega-N-methylarginine (arginine 269). A disordered region spans residues 294-315; that stretch reads PQALPPPPPPARALGPSSAETP. The residue at position 384 (serine 384) is a Phosphoserine.

In terms of assembly, heteromer. Composed of TAMALIN, CYTH2 and at least one GRM1. Also interacts with GRM2, GRM3 and GRM5. Interacts with CYTH3. As to expression, highly expressed in brain, heart and lung, and to a lower extent in embryo, kidney and ovary.

It is found in the cytoplasm. It localises to the perinuclear region. The protein resides in the cell membrane. The protein localises to the postsynaptic cell membrane. Functionally, plays a role in intracellular trafficking and contributes to the macromolecular organization of group 1 metabotropic glutamate receptors (mGluRs) at synapses. The polypeptide is General receptor for phosphoinositides 1-associated scaffold protein (Mus musculus (Mouse)).